The following is a 44-amino-acid chain: Unknown protein 1 (44 aa).

In Lonomia obliqua (Moth), this protein is Unknown protein 1.